Consider the following 253-residue polypeptide: Sulfur carrier protein FdhD (253 aa).

Cys-100 (cysteine persulfide intermediate) is an active-site residue.

Belongs to the FdhD family.

Its subcellular location is the cytoplasm. In terms of biological role, required for formate dehydrogenase (FDH) activity. Acts as a sulfur carrier protein that transfers sulfur from IscS to the molybdenum cofactor prior to its insertion into FDH. This Sulfolobus acidocaldarius (strain ATCC 33909 / DSM 639 / JCM 8929 / NBRC 15157 / NCIMB 11770) protein is Sulfur carrier protein FdhD.